We begin with the raw amino-acid sequence, 236 residues long: Orotidine 5'-phosphate decarboxylase (236 aa).

Substrate-binding positions include Asp-14, Lys-36, 63 to 72 (DLKFHDIPNT), Thr-122, Arg-183, Gln-192, Gly-212, and Arg-213. Catalysis depends on Lys-65, which acts as the Proton donor.

This sequence belongs to the OMP decarboxylase family. Type 1 subfamily. In terms of assembly, homodimer.

The catalysed reaction is orotidine 5'-phosphate + H(+) = UMP + CO2. It participates in pyrimidine metabolism; UMP biosynthesis via de novo pathway; UMP from orotate: step 2/2. Catalyzes the decarboxylation of orotidine 5'-monophosphate (OMP) to uridine 5'-monophosphate (UMP). This chain is Orotidine 5'-phosphate decarboxylase, found in Chromohalobacter salexigens (strain ATCC BAA-138 / DSM 3043 / CIP 106854 / NCIMB 13768 / 1H11).